Consider the following 989-residue polypeptide: MKPDRDAAEEFFEYDAEEFLVFLTLLITEGRTPECSVKGRTEGVHCPPAQSAMPVLTKHECSDKIPQCRQARRTRSEVMLLWRNHIPIMIEVMLLPDCCYSDEGPTTDCTDLNDPAIKQDALLLERWTLQPVPRQSGDRFIEEKTLLLAVRSYVFFSQLSAWLSASHGIVPRNILYRISAADEELIWNFSQTPSEHAFPVPNVSHSVALKVRVQSLPRQPRYPVLKCSIHSGLAFLGKRALEHGEGGNQAGDNRSSLRLPRSPLFSRSLHPSPPSHSPLNTRKCPPRPESPLPPGKAVKWLYSRLNGGIDTPPSEPYSLCTNGAESPKTSRTESPIRGFKSLSITDPLVIPSPSSISGETNPLIGSLLQERQEVIARIAQRLNFCDPTAPHLPDALFTSQEPPGHKTTWNSTQDKECLKKSKDSLFSVPHPQNHNGNSLEIPERSRSSLFDTPLSPRTRTRLDRVDRESKTSPKPATCRRLVLSDQSAEGSLIADAVQDISRLIQERLQHSYSLLNGTYKLKTSQNEQVGSNHGAQTNGFVSLSSHKKPTNAPNGEESTDPHISHATKCCRSPDSSRRKPDCSPRPLKVASLKLEDHSVTKSQPLTASNHQHYVSRESWTSLKNNSSHASSPQENGLTQIGYHQPFKNRVAISEKEAEKHVRDGSTCLEKDENQEPHSSLSSTPANLTCNISSLAPTESNQTSCGNWKKQTRHSIDGTATKAFHPCTGLPLLSSPVPQRKSQTGYFDLDTSLIHCRGVPWAANRRVLKRSQDYDESQHQILSASAPPANLSLLGNFEECVLNYRLEPLGTVEGFTAEVGASGTFCPSHMTLPVDVSFYSVSDDNAPSPYMGVINLESLGKRGYRVPPSGTIQVTLFNPNKTVVKMFVVMYDLRDMPASHQTFLRQRTFSVPVKREFNGQSNKKTSLGQGRTLRYLVHLRFQSSKSGKIYLHRDIRLLFSRKSMEVDSGAAYELKSFTELPADPPFSPRC.

The transactivation domain 1 (TAD1) stretch occupies residues 24–32 (TLLITEGRT). 4 disordered regions span residues 244-295 (GEGG…LPPG), 393-477 (PDAL…KPAT), 525-639 (QNEQ…GLTQ), and 656-686 (EAEKHVRDGSTCLEKDENQEPHSSLSSTPAN). Positions 254 to 270 (RSSLRLPRSPLFSRSLH) are enriched in low complexity. Residues 397–412 (FTSQEPPGHKTTWNST) show a composition bias toward polar residues. Basic and acidic residues-rich tracts occupy residues 413–423 (QDKECLKKSKD) and 460–471 (TRLDRVDRESKT). Polar residues-rich tracts occupy residues 525–544 (QNEQVGSNHGAQTNGFVSLS) and 600–638 (TKSQPLTASNHQHYVSRESWTSLKNNSSHASSPQENGLT). Residues 656-675 (EAEKHVRDGSTCLEKDENQE) show a composition bias toward basic and acidic residues. Polar residues predominate over residues 676–686 (PHSSLSSTPAN). Positions 792–849 (LLGNFEECVLNYRLEPLGTVEGFTAEVGASGTFCPSHMTLPVDVSFYSVSDDNAPSPY) are required for macropage invasion. A transactivation domain 2 (TAD2) region spans residues 876-884 (FNPNKTVVK).

It belongs to the ATOS family.

It is found in the nucleus. Its function is as follows. Transcription regulator that syncronizes transcriptional and translational programs to promote macrophage invasion of tissues. This Danio rerio (Zebrafish) protein is Atos homolog protein A (atosa).